A 725-amino-acid polypeptide reads, in one-letter code: MSEILIEEIKDQIVVKDEEIDVSELEVKLNVTKPVGYDTVVVIEGAPVVEEAKQQDFFRFLSSKVLAKIGKVKENGFYMPFEEKNGKKMSLGLVFADFENVDGADLCVQELDGKQILKNHTFVVRKLNQLEKAFSTPDEFSFEEREFKEREHLRSWLTDYYGRDQFISYYGNRVSVNWNRKSDVPEQIVDRENWTETYVQWSPMGTYLVSLHLRGIQLWGGESWGMCARFLHPYVKFVDFSPNEKYLVSWSYEPVRLPPIGHPARETMPFTDDDEGKHCFVWDIASGRILRSFKIPPQPEGSKDGKKVIWPIFKWSADDKYLARVTVGQSISVYETPSLALVDKKTIKIDGVQNFEWCPVSDALGRDSKEQLLAYWTPEITNQPARVALISIPSKSTIRTKNLFNVSDCKLYWQSNGDYLCVKVDRHTKTKKSTFSNLEIFRIREKNIPVEVVDLKDVVLNFAWEPKSDRFAIISANDQVLNSTNVKTNLSFYGFEQKKNTPSTFRHIITFDKKTCNSLFMAPKGRFMVAATLGSSTQYDLEFYDLDFDTEKKEPDALANVQQIGSAEHFGMTELEWDPSGRYVTTSSTIWRHKLENGYRLCDFRGTLLREEMIGEFKQFIWRPRPPSPLTKEDMKKIRKKLKDYNRLFDEEDIAEQSSANRELAARRRQLISEWQKYRDEVIARVAEERAITGQPAITVPAEEEEIIQETVEEVISEEIEPVED.

S23 carries the post-translational modification Phosphoserine. In terms of domain architecture, RRM spans 39 to 129; it reads TVVVIEGAPV…HTFVVRKLNQ (91 aa). S135 is subject to Phosphoserine. Residue T136 is modified to Phosphothreonine. WD repeat units lie at residues 190–229, 304–344, and 347–386; these read DREN…MCAR, DGKK…LVDK, and IKID…QPAR. A coiled-coil region spans residues 630 to 671; that stretch reads LTKEDMKKIRKKLKDYNRLFDEEDIAEQSSANRELAARRRQL.

The protein belongs to the eIF-3 subunit B family. Component of the eukaryotic translation initiation factor 3 (eIF-3) complex. The eIF-3 complex appears to include tif32/eif3a, SPAC25G10.08/eif3b, tif33/eif3c, SPBC4C3.07/eif3f, tif35/eif3g and sum1/eif3i. This set of common subunits may also associate exclusively with either moe1/eif3d and int6/eif3e, or with SPAC821.05/eif3h and SPAC1751.03/eif3m. The eIF-3 complex may also include SPAC3A12.13c/eif3j.

It is found in the cytoplasm. Functionally, RNA-binding component of the eukaryotic translation initiation factor 3 (eIF-3) complex, which is involved in protein synthesis of a specialized repertoire of mRNAs and, together with other initiation factors, stimulates binding of mRNA and methionyl-tRNAi to the 40S ribosome. The eIF-3 complex specifically targets and initiates translation of a subset of mRNAs involved in cell proliferation. The sequence is that of Eukaryotic translation initiation factor 3 subunit B from Schizosaccharomyces pombe (strain 972 / ATCC 24843) (Fission yeast).